The primary structure comprises 409 residues: DNA primase DnaG (409 aa).

In terms of domain architecture, Toprim spans 175-261 (DAIIVVEGRA…EVEELTRKEI (87 aa)). Mg(2+) is bound by residues Glu181, Asp223, and Asp225. A compositionally biased stretch (basic and acidic residues) spans 280 to 289 (ERPKDKEREK). The interval 280–322 (ERPKDKEREKGKKPKPKKRPERRGRPRKKKARPKRGPQERRLL) is disordered. Positions 290-314 (GKKPKPKKRPERRGRPRKKKARPKR) are enriched in basic residues.

This sequence belongs to the archaeal DnaG primase family. In terms of assembly, forms a ternary complex with MCM helicase and DNA. Component of the archaeal exosome complex. Requires Mg(2+) as cofactor.

The enzyme catalyses ssDNA + n NTP = ssDNA/pppN(pN)n-1 hybrid + (n-1) diphosphate.. In terms of biological role, RNA polymerase that catalyzes the synthesis of short RNA molecules used as primers for DNA polymerase during DNA replication. Also part of the exosome, which is a complex involved in RNA degradation. Acts as a poly(A)-binding protein that enhances the interaction between heteromeric, adenine-rich transcripts and the exosome. This Methanopyrus kandleri (strain AV19 / DSM 6324 / JCM 9639 / NBRC 100938) protein is DNA primase DnaG.